A 317-amino-acid polypeptide reads, in one-letter code: Succinate receptor 1 (317 aa).

Residues M1 to G27 lie on the Extracellular side of the membrane. A glycan (N-linked (GlcNAc...) asparagine) is linked at N4. Residues I28–M48 form a helical membrane-spanning segment. The Cytoplasmic segment spans residues K49–N55. A helical transmembrane segment spans residues V56 to I76. The Extracellular segment spans residues R77–H99. Residues C91 and C168 are joined by a disulfide bond. The chain crosses the membrane as a helical span at residues A100–M120. The Cytoplasmic portion of the chain corresponds to K121–E133. The chain crosses the membrane as a helical span at residues F134–L154. Over T155–L181 the chain is Extracellular. A helical membrane pass occupies residues I182–F202. The Cytoplasmic portion of the chain corresponds to Y203–P226. The helical transmembrane segment at L227–M247 threads the bilayer. The Extracellular portion of the chain corresponds to R248–R276. Residues P277 to F297 form a helical membrane-spanning segment. Over R298–L317 the chain is Cytoplasmic.

This sequence belongs to the G-protein coupled receptor 1 family. In terms of tissue distribution, expressed in retina.

The protein localises to the cell membrane. Its function is as follows. G protein-coupled receptor for succinate able to mediate signaling through Gq/GNAQ or Gi/GNAI second messengers depending on the cell type and the processes regulated. Succinate-SUCNR1 signaling serves as a link between metabolic stress, inflammation and energy homeostasisn. In macrophages, plays a range of immune-regulatory roles. During inflammation, succinate-SUCNR1 signaling may act as an anti-inflammatory mediator or boost inflammation depending on the inflammatory status of cells. Hyperpolarizes M2 macrophages versus M1 phenotype through Gq signaling by regulating the transcription of genes involved in immune function. In activated M1 macrophages, plays a pro-inflammatory role in response to LPS. Expressed in dendritic cells, where it is involved in the sensing of immunological danger and enhances immunity. Mediates succinate triggered intracelleular calcium mobilization, induces migratory responses and acts in synergy with Toll-like receptor ligands for the production of proinflammatory cytokines as well as an enhancement of antigen-specific activation of helper T cells. In the small intestine, mediates the activation of tuft cells by dietary succinate and triggers type 2 immunity. In adipocytes, plays an important role in the control of energy metabolism. In response to succinate, controls leptin expression in an AMPK-JNK-CEBPA-dependent as well as circadian clock-regulated manner. In muscle tissue, is expressed in non-muscle cells and coordinates muscle remodeling in response to the succinate produced during exercise training in a paracrine manner. In retina, acts as a mediator of vessel growth during retinal development. In response to succinate, regulates the production of angiogenic factors, including VEGF, by retinal ganglion neurons. The sequence is that of Succinate receptor 1 (Sucnr1) from Rattus norvegicus (Rat).